A 573-amino-acid chain; its full sequence is ATP-dependent RNA helicase RhlB (573 aa).

A Q motif motif is present at residues 9–37 (LTFSSFDLHPALVAGLESAGFTRCTPIQA). A Helicase ATP-binding domain is found at 40 to 220 (LPVALPGGDV…YEHMNEPEKL (181 aa)). 53 to 60 (AQTGTGKT) contacts ATP. The DEAD box motif lies at 166–169 (DEAD). The Helicase C-terminal domain occupies 231 to 393 (RVRQRIYFPS…PVTTELLTPL (163 aa)). The span at 391–400 (TPLPRTPRAT) shows a compositional bias: low complexity. A disordered region spans residues 391–559 (TPLPRTPRAT…AKPSGSPSLL (169 aa)). Positions 402–411 (EGEEVDDDAG) are enriched in acidic residues. Over residues 419 to 432 (REAREQRAADEARR) the composition is skewed to basic and acidic residues. Over residues 435 to 449 (GRSGPGGASRSGSGG) the composition is skewed to gly residues. Basic and acidic residues predominate over residues 450-461 (GRRDGAGADGKP). The span at 476-499 (PAAAPSETPVVVAAAAETPAVTAA) shows a compositional bias: low complexity. Over residues 505–514 (PRKRRRRRNG) the composition is skewed to basic residues. Low complexity-rich tracts occupy residues 516 to 528 (PVEGAEPVVASTP) and 541 to 559 (VVAKPVRAAAKPSGSPSLL).

It belongs to the DEAD box helicase family. RhlB subfamily. As to quaternary structure, component of the RNA degradosome, which is a multiprotein complex involved in RNA processing and mRNA degradation.

The protein resides in the cytoplasm. The catalysed reaction is ATP + H2O = ADP + phosphate + H(+). Functionally, DEAD-box RNA helicase involved in RNA degradation. Has RNA-dependent ATPase activity and unwinds double-stranded RNA. The polypeptide is ATP-dependent RNA helicase RhlB (Xanthomonas campestris pv. campestris (strain B100)).